We begin with the raw amino-acid sequence, 360 residues long: COP9 signalosome complex subunit 5 (360 aa).

Residues 60-197 enclose the MPN domain; sequence AKISALALLK…IGAFRTYPKD (138 aa). Histidine 143, histidine 145, and aspartate 156 together coordinate Zn(2+). A JAMM motif motif is present at residues 143 to 156; sequence HSHPGYGCWLSGID. Disordered stretches follow at residues 293 to 315 and 341 to 360; these read LMPS…RDSS and SNKA…MVEA. Positions 341 to 350 are enriched in polar residues; that stretch reads SNKASTSAPD.

It belongs to the peptidase M67A family. CSN5 subfamily. As to quaternary structure, component of the CSN complex, probably composed of CSN1, CSN2, CSN3, CSN4, CSN5, CSN6, CSN7 and CSN8. Interacts with MCM2.

Its function is as follows. Probable protease subunit of the COP9 signalosome complex (CSN), a complex involved in various cellular and developmental processes such as photomorphogenesis and response to hormones. The CSN complex is an essential regulator of the ubiquitin (Ubl) conjugation pathway by mediating the deneddylation of the cullin subunits of SCF-type E3 ligase complexes, leading to decrease the Ubl ligase activity of SCF. Involved in early response to iron deficiency. The protein is COP9 signalosome complex subunit 5 of Oryza sativa subsp. japonica (Rice).